Consider the following 85-residue polypeptide: Large ribosomal subunit protein bL27 (85 aa).

The segment at 1–22 (MAKTKAGGSTRNGRDSKGRRLG) is disordered.

Belongs to the bacterial ribosomal protein bL27 family.

This chain is Large ribosomal subunit protein bL27, found in Mycoplasmopsis pulmonis (strain UAB CTIP) (Mycoplasma pulmonis).